Consider the following 217-residue polypeptide: Proteasome subunit beta type-9 (217 aa).

The propeptide at 1 to 18 is removed in mature form; the sequence is MLEESSEPGWLSEEVKTG. The active-site Nucleophile is Thr19.

Belongs to the peptidase T1B family. The 26S proteasome consists of a 20S proteasome core and two 19S regulatory subunits. The 20S proteasome core is composed of 28 subunits that are arranged in four stacked rings, resulting in a barrel-shaped structure. The two end rings are each formed by seven alpha subunits, and the two central rings are each formed by seven beta subunits. The catalytic chamber with the active sites is on the inside of the barrel. Component of the immunoproteasome, where it displaces the equivalent housekeeping subunit PSMB6. Post-translationally, autocleaved. The resulting N-terminal Thr residue of the mature subunit is responsible for the nucleophile proteolytic activity.

Its subcellular location is the cytoplasm. The protein localises to the nucleus. The catalysed reaction is Cleavage of peptide bonds with very broad specificity.. Functionally, the proteasome is a multicatalytic proteinase complex which is characterized by its ability to cleave peptides with Arg, Phe, Tyr, Leu, and Glu adjacent to the leaving group at neutral or slightly basic pH. The proteasome has an ATP-dependent proteolytic activity. This subunit is involved in antigen processing to generate class I binding peptides. The polypeptide is Proteasome subunit beta type-9 (psmb9-a) (Salmo salar (Atlantic salmon)).